Consider the following 319-residue polypeptide: tRNA uridine(34) hydroxylase (319 aa).

The region spanning glutamate 133–serine 231 is the Rhodanese domain. Cysteine 191 serves as the catalytic Cysteine persulfide intermediate.

Belongs to the TrhO family.

The catalysed reaction is uridine(34) in tRNA + AH2 + O2 = 5-hydroxyuridine(34) in tRNA + A + H2O. Its function is as follows. Catalyzes oxygen-dependent 5-hydroxyuridine (ho5U) modification at position 34 in tRNAs. This is tRNA uridine(34) hydroxylase from Prochlorococcus marinus (strain NATL2A).